The chain runs to 88 residues: Phosphocarrier protein HPr (88 aa).

The HPr domain occupies 1–88 (MEKREFNIIA…DTMKKEGLAE (88 aa)). H15 serves as the catalytic Pros-phosphohistidine intermediate. Position 46 is a phosphoserine; by HPrK/P (S46).

It belongs to the HPr family.

It localises to the cytoplasm. Its activity is regulated as follows. Phosphorylation on Ser-46 inhibits the phosphoryl transfer from enzyme I to HPr. Functionally, general (non sugar-specific) component of the phosphoenolpyruvate-dependent sugar phosphotransferase system (sugar PTS). This major carbohydrate active-transport system catalyzes the phosphorylation of incoming sugar substrates concomitantly with their translocation across the cell membrane. The phosphoryl group from phosphoenolpyruvate (PEP) is transferred to the phosphoryl carrier protein HPr by enzyme I. Phospho-HPr then transfers it to the PTS EIIA domain. P-Ser-HPr interacts with the catabolite control protein A (CcpA), forming a complex that binds to DNA at the catabolite response elements cre, operator sites preceding a large number of catabolite-regulated genes. Thus, P-Ser-HPr is a corepressor in carbon catabolite repression (CCR), a mechanism that allows bacteria to coordinate and optimize the utilization of available carbon sources. P-Ser-HPr also plays a role in inducer exclusion, in which it probably interacts with several non-PTS permeases and inhibits their transport activity. This chain is Phosphocarrier protein HPr (ptsH), found in Lacticaseibacillus casei (Lactobacillus casei).